Reading from the N-terminus, the 86-residue chain is Small ribosomal subunit protein uS15 (86 aa).

Over residues 1–10 (MSIDTQSIIE) the composition is skewed to polar residues. The segment at 1–21 (MSIDTQSIIENNKRSAHDTGS) is disordered.

Belongs to the universal ribosomal protein uS15 family. As to quaternary structure, part of the 30S ribosomal subunit. Forms a bridge to the 50S subunit in the 70S ribosome, contacting the 23S rRNA.

Functionally, one of the primary rRNA binding proteins, it binds directly to 16S rRNA where it helps nucleate assembly of the platform of the 30S subunit by binding and bridging several RNA helices of the 16S rRNA. In terms of biological role, forms an intersubunit bridge (bridge B4) with the 23S rRNA of the 50S subunit in the ribosome. The polypeptide is Small ribosomal subunit protein uS15 (Xylella fastidiosa (strain 9a5c)).